We begin with the raw amino-acid sequence, 96 residues long: Large ribosomal subunit protein bL27 (96 aa).

Residues 1–9 (MLRLDLQFF) constitute a propeptide that is removed on maturation.

It belongs to the bacterial ribosomal protein bL27 family. In terms of processing, the N-terminus is cleaved by ribosomal processing cysteine protease Prp.

The chain is Large ribosomal subunit protein bL27 from Geobacillus kaustophilus (strain HTA426).